Here is a 573-residue protein sequence, read N- to C-terminus: Proline--tRNA ligase (573 aa).

This sequence belongs to the class-II aminoacyl-tRNA synthetase family. ProS type 1 subfamily. Homodimer.

The protein resides in the cytoplasm. The catalysed reaction is tRNA(Pro) + L-proline + ATP = L-prolyl-tRNA(Pro) + AMP + diphosphate. Its function is as follows. Catalyzes the attachment of proline to tRNA(Pro) in a two-step reaction: proline is first activated by ATP to form Pro-AMP and then transferred to the acceptor end of tRNA(Pro). As ProRS can inadvertently accommodate and process non-cognate amino acids such as alanine and cysteine, to avoid such errors it has two additional distinct editing activities against alanine. One activity is designated as 'pretransfer' editing and involves the tRNA(Pro)-independent hydrolysis of activated Ala-AMP. The other activity is designated 'posttransfer' editing and involves deacylation of mischarged Ala-tRNA(Pro). The misacylated Cys-tRNA(Pro) is not edited by ProRS. This Elusimicrobium minutum (strain Pei191) protein is Proline--tRNA ligase.